Reading from the N-terminus, the 179-residue chain is Probable DNA-directed RNA polymerase subunit delta (179 aa).

The HTH HARE-type domain maps to 14–81 (MSLVELAYEI…GDQRWGLRSW (68 aa)). The tract at residues 108–179 (VVEEDFDEIE…DDLDDNEEEK (72 aa)) is disordered. The span at 109 to 179 (VEEDFDEIEE…DDLDDNEEEK (71 aa)) shows a compositional bias: acidic residues.

This sequence belongs to the RpoE family. As to quaternary structure, RNAP is composed of a core of 2 alpha, a beta and a beta' subunits. The core is associated with a delta subunit and one of several sigma factors.

Its function is as follows. Participates in both the initiation and recycling phases of transcription. In the presence of the delta subunit, RNAP displays an increased specificity of transcription, a decreased affinity for nucleic acids, and an increased efficiency of RNA synthesis because of enhanced recycling. The chain is Probable DNA-directed RNA polymerase subunit delta from Bacillus pumilus (strain SAFR-032).